A 234-amino-acid polypeptide reads, in one-letter code: 2-C-methyl-D-erythritol 4-phosphate cytidylyltransferase (234 aa).

Belongs to the IspD/TarI cytidylyltransferase family. IspD subfamily.

The catalysed reaction is 2-C-methyl-D-erythritol 4-phosphate + CTP + H(+) = 4-CDP-2-C-methyl-D-erythritol + diphosphate. Its pathway is isoprenoid biosynthesis; isopentenyl diphosphate biosynthesis via DXP pathway; isopentenyl diphosphate from 1-deoxy-D-xylulose 5-phosphate: step 2/6. Functionally, catalyzes the formation of 4-diphosphocytidyl-2-C-methyl-D-erythritol from CTP and 2-C-methyl-D-erythritol 4-phosphate (MEP). This is 2-C-methyl-D-erythritol 4-phosphate cytidylyltransferase from Shewanella sediminis (strain HAW-EB3).